The sequence spans 335 residues: DNA-directed RNA polymerase subunit alpha (335 aa).

Residues 1-233 (MVREKIRVST…DLLIPFLHAE (233 aa)) are alpha N-terminal domain (alpha-NTD). Positions 263–335 (KKKIALKFIF…HFVIDLKNKR (73 aa)) are alpha C-terminal domain (alpha-CTD).

Belongs to the RNA polymerase alpha chain family. In terms of assembly, in plastids the minimal PEP RNA polymerase catalytic core is composed of four subunits: alpha, beta, beta', and beta''. When a (nuclear-encoded) sigma factor is associated with the core the holoenzyme is formed, which can initiate transcription.

The protein resides in the plastid. Its subcellular location is the chloroplast. The catalysed reaction is RNA(n) + a ribonucleoside 5'-triphosphate = RNA(n+1) + diphosphate. Its function is as follows. DNA-dependent RNA polymerase catalyzes the transcription of DNA into RNA using the four ribonucleoside triphosphates as substrates. This chain is DNA-directed RNA polymerase subunit alpha, found in Spinacia oleracea (Spinach).